The sequence spans 524 residues: Bifunctional purine biosynthesis protein PurH (524 aa).

An MGS-like domain is found at 1–149 (MSDPLIKRAL…KNNESVTVLT (149 aa)).

The protein belongs to the PurH family.

The enzyme catalyses (6R)-10-formyltetrahydrofolate + 5-amino-1-(5-phospho-beta-D-ribosyl)imidazole-4-carboxamide = 5-formamido-1-(5-phospho-D-ribosyl)imidazole-4-carboxamide + (6S)-5,6,7,8-tetrahydrofolate. It catalyses the reaction IMP + H2O = 5-formamido-1-(5-phospho-D-ribosyl)imidazole-4-carboxamide. It functions in the pathway purine metabolism; IMP biosynthesis via de novo pathway; 5-formamido-1-(5-phospho-D-ribosyl)imidazole-4-carboxamide from 5-amino-1-(5-phospho-D-ribosyl)imidazole-4-carboxamide (10-formyl THF route): step 1/1. It participates in purine metabolism; IMP biosynthesis via de novo pathway; IMP from 5-formamido-1-(5-phospho-D-ribosyl)imidazole-4-carboxamide: step 1/1. The sequence is that of Bifunctional purine biosynthesis protein PurH from Chlorobium phaeovibrioides (strain DSM 265 / 1930) (Prosthecochloris vibrioformis (strain DSM 265)).